The chain runs to 174 residues: Crossover junction endodeoxyribonuclease RuvC (174 aa).

Active-site residues include Asp-16, Glu-76, and Asp-148. Residues Asp-16, Glu-76, and Asp-148 each contribute to the Mg(2+) site.

Belongs to the RuvC family. In terms of assembly, homodimer which binds Holliday junction (HJ) DNA. The HJ becomes 2-fold symmetrical on binding to RuvC with unstacked arms; it has a different conformation from HJ DNA in complex with RuvA. In the full resolvosome a probable DNA-RuvA(4)-RuvB(12)-RuvC(2) complex forms which resolves the HJ. Mg(2+) serves as cofactor.

Its subcellular location is the cytoplasm. The enzyme catalyses Endonucleolytic cleavage at a junction such as a reciprocal single-stranded crossover between two homologous DNA duplexes (Holliday junction).. In terms of biological role, the RuvA-RuvB-RuvC complex processes Holliday junction (HJ) DNA during genetic recombination and DNA repair. Endonuclease that resolves HJ intermediates. Cleaves cruciform DNA by making single-stranded nicks across the HJ at symmetrical positions within the homologous arms, yielding a 5'-phosphate and a 3'-hydroxyl group; requires a central core of homology in the junction. The consensus cleavage sequence is 5'-(A/T)TT(C/G)-3'. Cleavage occurs on the 3'-side of the TT dinucleotide at the point of strand exchange. HJ branch migration catalyzed by RuvA-RuvB allows RuvC to scan DNA until it finds its consensus sequence, where it cleaves and resolves the cruciform DNA. This Rhodopseudomonas palustris (strain ATCC BAA-98 / CGA009) protein is Crossover junction endodeoxyribonuclease RuvC.